Consider the following 556-residue polypeptide: Formate--tetrahydrofolate ligase (556 aa).

65 to 72 (TPAGEGKS) is a binding site for ATP.

This sequence belongs to the formate--tetrahydrofolate ligase family.

The catalysed reaction is (6S)-5,6,7,8-tetrahydrofolate + formate + ATP = (6R)-10-formyltetrahydrofolate + ADP + phosphate. It functions in the pathway one-carbon metabolism; tetrahydrofolate interconversion. This is Formate--tetrahydrofolate ligase from Streptococcus pneumoniae (strain ATCC 700669 / Spain 23F-1).